The sequence spans 235 residues: Vacuolar protein sorting-associated protein 60.2 (235 aa).

Positions M1–S30 are disordered. Basic and acidic residues predominate over residues A20–S30. Residues L99–T148 adopt a coiled-coil conformation. The tract at residues D174–G235 is disordered.

It belongs to the SNF7 family.

Its subcellular location is the endosome. It is found in the multivesicular body membrane. In terms of biological role, probable peripherally associated component of the endosomal sorting required for transport complex III (ESCRT-III) which is involved in multivesicular bodies (MVBs) formation and sorting of endosomal cargo proteins into MVBs. The protein is Vacuolar protein sorting-associated protein 60.2 of Arabidopsis thaliana (Mouse-ear cress).